A 236-amino-acid chain; its full sequence is Geranylgeranylglyceryl phosphate synthase (236 aa).

Residue Lys-13 participates in sn-glycerol 1-phosphate binding. Mg(2+) contacts are provided by Asp-15 and Thr-42. Residues 161 to 166 (YVEYSG), Gly-191, and 211 to 212 (GD) each bind sn-glycerol 1-phosphate.

Belongs to the GGGP/HepGP synthase family. Group I subfamily. Mg(2+) serves as cofactor.

Its subcellular location is the cytoplasm. The enzyme catalyses sn-glycerol 1-phosphate + (2E,6E,10E)-geranylgeranyl diphosphate = sn-3-O-(geranylgeranyl)glycerol 1-phosphate + diphosphate. It functions in the pathway membrane lipid metabolism; glycerophospholipid metabolism. In terms of biological role, prenyltransferase that catalyzes the transfer of the geranylgeranyl moiety of geranylgeranyl diphosphate (GGPP) to the C3 hydroxyl of sn-glycerol-1-phosphate (G1P). This reaction is the first ether-bond-formation step in the biosynthesis of archaeal membrane lipids. The polypeptide is Geranylgeranylglyceryl phosphate synthase (Halobacterium salinarum (strain ATCC 700922 / JCM 11081 / NRC-1) (Halobacterium halobium)).